Here is a 200-residue protein sequence, read N- to C-terminus: ATP synthase subunit b 2 (200 aa).

The segment covering 1–16 (MAEQNILTTPSPNADT) has biased composition (polar residues). The tract at residues 1–38 (MAEQNILTTPSPNADTTIVPPGSPHTHTEQPSGGHGGA) is disordered. A helical membrane pass occupies residues 46–66 (TFLAQLIWLALAFGLLYYLMS).

It belongs to the ATPase B chain family. F-type ATPases have 2 components, F(1) - the catalytic core - and F(0) - the membrane proton channel. F(1) has five subunits: alpha(3), beta(3), gamma(1), delta(1), epsilon(1). F(0) has three main subunits: a(1), b(2) and c(10-14). The alpha and beta chains form an alternating ring which encloses part of the gamma chain. F(1) is attached to F(0) by a central stalk formed by the gamma and epsilon chains, while a peripheral stalk is formed by the delta and b chains.

It localises to the cell inner membrane. F(1)F(0) ATP synthase produces ATP from ADP in the presence of a proton or sodium gradient. F-type ATPases consist of two structural domains, F(1) containing the extramembraneous catalytic core and F(0) containing the membrane proton channel, linked together by a central stalk and a peripheral stalk. During catalysis, ATP synthesis in the catalytic domain of F(1) is coupled via a rotary mechanism of the central stalk subunits to proton translocation. Its function is as follows. Component of the F(0) channel, it forms part of the peripheral stalk, linking F(1) to F(0). The b'-subunit is a diverged and duplicated form of b found in plants and photosynthetic bacteria. This chain is ATP synthase subunit b 2 (atpF2), found in Methylorubrum populi (strain ATCC BAA-705 / NCIMB 13946 / BJ001) (Methylobacterium populi).